The following is a 360-amino-acid chain: N5-carboxyaminoimidazole ribonucleotide synthase (360 aa).

Residues R98, K138, G143–Q149, E173–V176, E181, H204, and N255–E256 contribute to the ATP site. Positions K102–A285 constitute an ATP-grasp domain.

Belongs to the PurK/PurT family. In terms of assembly, homodimer.

It catalyses the reaction 5-amino-1-(5-phospho-beta-D-ribosyl)imidazole + hydrogencarbonate + ATP = 5-carboxyamino-1-(5-phospho-D-ribosyl)imidazole + ADP + phosphate + 2 H(+). The protein operates within purine metabolism; IMP biosynthesis via de novo pathway; 5-amino-1-(5-phospho-D-ribosyl)imidazole-4-carboxylate from 5-amino-1-(5-phospho-D-ribosyl)imidazole (N5-CAIR route): step 1/2. In terms of biological role, catalyzes the ATP-dependent conversion of 5-aminoimidazole ribonucleotide (AIR) and HCO(3)(-) to N5-carboxyaminoimidazole ribonucleotide (N5-CAIR). The protein is N5-carboxyaminoimidazole ribonucleotide synthase of Pseudomonas aeruginosa (strain ATCC 15692 / DSM 22644 / CIP 104116 / JCM 14847 / LMG 12228 / 1C / PRS 101 / PAO1).